A 116-amino-acid chain; its full sequence is Iron-sulfur cluster insertion protein ErpA (116 aa).

3 residues coordinate iron-sulfur cluster: Cys44, Cys108, and Cys110.

This sequence belongs to the HesB/IscA family. Homodimer. It depends on iron-sulfur cluster as a cofactor.

Its function is as follows. Required for insertion of 4Fe-4S clusters for at least IspG. The chain is Iron-sulfur cluster insertion protein ErpA from Shewanella halifaxensis (strain HAW-EB4).